Consider the following 210-residue polypeptide: Putative biopolymer transport protein ExbB-like 3 (210 aa).

The next 3 membrane-spanning stretches (helical) occupy residues 2-22 (AGGIVAVPLLGFSLLAVALII), 104-124 (LFQTIITVSPLLGLLGTILGL), and 152-172 (LVSTVMGLVVAIATLLFANVF).

This sequence belongs to the ExbB/TolQ family.

The protein localises to the cell inner membrane. In terms of biological role, involved in the TonB-dependent energy-dependent transport of various receptor-bound substrates. Protects ExbD from proteolytic degradation and functionally stabilizes TonB. The chain is Putative biopolymer transport protein ExbB-like 3 from Synechocystis sp. (strain ATCC 27184 / PCC 6803 / Kazusa).